Reading from the N-terminus, the 757-residue chain is E3 ubiquitin-protein ligase SMURF1 (757 aa).

In terms of domain architecture, C2 spans 1–120 (MSNPGTRRNG…TGYQRLDLCK (120 aa)). Residues 193–237 (GNCRFVESPSQDQRLQAQRLRNPDVRGSLQTPQNRPHGHQSPELP) form a disordered region. Residue serine 200 is modified to Phosphoserine. WW domains are found at residues 234 to 267 (PELP…DPRI) and 306 to 339 (GPLP…DPRL). Residues lysine 381 and lysine 383 each participate in a glycyl lysine isopeptide (Lys-Gly) (interchain with G-Cter in ubiquitin) cross-link. The HECT domain maps to 420–757 (RPKDLKKRLM…VEETCGFAVE (338 aa)). Cysteine 725 acts as the Glycyl thioester intermediate in catalysis.

In terms of assembly, interacts with TRAF4. Interacts (via HECT domain) with FBXL15 (via LRR repeats). Interacts with SMAD7 and TGFBR1; SMAD7 recruits SMURF1 to TGFBR1 and regulates TGF-beta receptor degradation. Interacts with MAVS; the interaction is mediated by NDFIP1. In terms of processing, auto-ubiquitinated in presence of NDFIP1. Ubiquitinated by the SCF(FBXL15) complex at Lys-381 and Lys-383, leading to its degradation by the proteasome. Lys-383 is the primary ubiquitination site. In terms of tissue distribution, expressed in melanocytes.

Its subcellular location is the cytoplasm. The protein localises to the cell membrane. It carries out the reaction S-ubiquitinyl-[E2 ubiquitin-conjugating enzyme]-L-cysteine + [acceptor protein]-L-lysine = [E2 ubiquitin-conjugating enzyme]-L-cysteine + N(6)-ubiquitinyl-[acceptor protein]-L-lysine.. Its pathway is protein modification; protein ubiquitination. Its function is as follows. E3 ubiquitin-protein ligase that acts as a negative regulator of BMP signaling pathway. Mediates ubiquitination and degradation of SMAD1 and SMAD5, 2 receptor-regulated SMADs specific for the BMP pathway. Promotes ubiquitination and subsequent proteasomal degradation of TRAF family members and RHOA. Promotes ubiquitination and subsequent proteasomal degradation of MAVS. Acts as an antagonist of TGF-beta signaling by ubiquitinating TGFBR1 and targeting it for degradation. Plays a role in dendrite formation by melanocytes. In Homo sapiens (Human), this protein is E3 ubiquitin-protein ligase SMURF1 (SMURF1).